Consider the following 384-residue polypeptide: Protein RecA (384 aa).

76–83 (GPESSGKT) contacts ATP. The segment at 346-365 (QGSAEPEKAAKPEKVEKADK) is disordered. A compositionally biased stretch (basic and acidic residues) spans 350–365 (EPEKAAKPEKVEKADK).

It belongs to the RecA family.

It localises to the cytoplasm. In terms of biological role, can catalyze the hydrolysis of ATP in the presence of single-stranded DNA, the ATP-dependent uptake of single-stranded DNA by duplex DNA, and the ATP-dependent hybridization of homologous single-stranded DNAs. It interacts with LexA causing its activation and leading to its autocatalytic cleavage. The chain is Protein RecA from Polaromonas naphthalenivorans (strain CJ2).